Here is a 1196-residue protein sequence, read N- to C-terminus: DNA-directed RNA polymerase subunit beta (1196 aa).

The protein belongs to the RNA polymerase beta chain family. As to quaternary structure, the RNAP catalytic core consists of 2 alpha, 1 beta, 1 beta' and 1 omega subunit. When a sigma factor is associated with the core the holoenzyme is formed, which can initiate transcription.

The catalysed reaction is RNA(n) + a ribonucleoside 5'-triphosphate = RNA(n+1) + diphosphate. In terms of biological role, DNA-dependent RNA polymerase catalyzes the transcription of DNA into RNA using the four ribonucleoside triphosphates as substrates. This chain is DNA-directed RNA polymerase subunit beta, found in Lactococcus lactis subsp. cremoris (strain SK11).